Reading from the N-terminus, the 138-residue chain is Putative nickel-responsive regulator (138 aa).

H78, H89, H91, and C97 together coordinate Ni(2+).

The protein belongs to the transcriptional regulatory CopG/NikR family. Requires Ni(2+) as cofactor.

Transcriptional regulator. The chain is Putative nickel-responsive regulator from Thermococcus onnurineus (strain NA1).